The primary structure comprises 187 residues: ATP synthase subunit b 2 (187 aa).

The segment covering M1–D12 has biased composition (basic and acidic residues). The interval M1–P31 is disordered. The helical transmembrane segment at L40–L60 threads the bilayer.

The protein belongs to the ATPase B chain family. As to quaternary structure, F-type ATPases have 2 components, F(1) - the catalytic core - and F(0) - the membrane proton channel. F(1) has five subunits: alpha(3), beta(3), gamma(1), delta(1), epsilon(1). F(0) has three main subunits: a(1), b(2) and c(10-14). The alpha and beta chains form an alternating ring which encloses part of the gamma chain. F(1) is attached to F(0) by a central stalk formed by the gamma and epsilon chains, while a peripheral stalk is formed by the delta and b chains.

Its subcellular location is the cell inner membrane. F(1)F(0) ATP synthase produces ATP from ADP in the presence of a proton or sodium gradient. F-type ATPases consist of two structural domains, F(1) containing the extramembraneous catalytic core and F(0) containing the membrane proton channel, linked together by a central stalk and a peripheral stalk. During catalysis, ATP synthesis in the catalytic domain of F(1) is coupled via a rotary mechanism of the central stalk subunits to proton translocation. Functionally, component of the F(0) channel, it forms part of the peripheral stalk, linking F(1) to F(0). The b'-subunit is a diverged and duplicated form of b found in plants and photosynthetic bacteria. The protein is ATP synthase subunit b 2 (atpF2) of Beijerinckia indica subsp. indica (strain ATCC 9039 / DSM 1715 / NCIMB 8712).